A 620-amino-acid chain; its full sequence is Ferric/cupric reductase transmembrane component 7 (620 aa).

The Extracellular portion of the chain corresponds to 1–45 (MIEERDLVLSNGIHCIADIHSELYARLKKESQAVTPWVYQKQYGK). The chain crosses the membrane as a helical span at residues 46–66 (FVTYFVAVIIFLSLIKKLAFM). Over 67–107 (YYDSSEEFLPEKKNSPTTPSVFLARIMTKLVAFNRYICYRK) the chain is Cytoplasmic. Residues 108 to 128 (FPTLIFSYLGIPTSVGTFLVV) form a helical membrane-spanning segment. Residues 129 to 167 (MATTLYTLLYCFVPHPFYRPCAGFGSPPLSVRAGIMAIS) lie on the Extracellular side of the membrane. The region spanning 161–320 (AGIMAISLVS…LAVKGYLRPG (160 aa)) is the Ferric oxidoreductase domain. A helical transmembrane segment spans residues 168–188 (LVSFVFSLSGKINVIGWLVGL). The Cytoplasmic segment spans residues 189 to 194 (SYEKIN). Residues 195–215 (IYHQWASILCLFFSWVHVIPF) form a helical membrane-spanning segment. Heme is bound by residues His197 and His211. Residues 216–237 (LRQARHEGGYERMHQRWKASDM) are Extracellular-facing. The chain crosses the membrane as a helical span at residues 238–258 (WRSGVPPILFLNLLWLSSLPI). Topologically, residues 259–265 (ARRHFYE) are cytoplasmic. Residues 266–286 (IFLQLHWILAVGFYISLFYHV) form a helical membrane-spanning segment. Residues His271 and His285 each coordinate heme. Residues 287-292 (YPELNS) are Extracellular-facing. Residues 293 to 313 (HMYLVATIVVWFAQLFYRLAV) form a helical membrane-spanning segment. Residues 314 to 620 (KGYLRPGRSF…CYLHSESFGY (307 aa)) lie on the Cytoplasmic side of the membrane. The FAD-binding FR-type domain maps to 321–419 (RSFMASTIAN…DGPYGGIERD (99 aa)). 369–375 (HPFSIFP) lines the FAD pocket. A disordered region spans residues 519–544 (SDQSDLAKREKDTEFGQDDTESNSTF). Positions 523 to 532 (DLAKREKDTE) are enriched in basic and acidic residues.

Belongs to the ferric reductase (FRE) family. The cofactor is FAD.

The protein resides in the cell membrane. The enzyme catalyses 2 a Fe(II)-siderophore + NADP(+) + H(+) = 2 a Fe(III)-siderophore + NADPH. In terms of biological role, cell surface metalloreductase. May be involved in copper homeostasis. The polypeptide is Ferric/cupric reductase transmembrane component 7 (FRE7) (Saccharomyces cerevisiae (strain YJM789) (Baker's yeast)).